A 141-amino-acid chain; its full sequence is Nucleoside diphosphate kinase (141 aa).

The ATP site is built by lysine 11, phenylalanine 59, arginine 87, threonine 93, arginine 104, and asparagine 114. Histidine 117 acts as the Pros-phosphohistidine intermediate in catalysis.

It belongs to the NDK family. As to quaternary structure, homotetramer. Requires Mg(2+) as cofactor.

It is found in the cytoplasm. The catalysed reaction is a 2'-deoxyribonucleoside 5'-diphosphate + ATP = a 2'-deoxyribonucleoside 5'-triphosphate + ADP. The enzyme catalyses a ribonucleoside 5'-diphosphate + ATP = a ribonucleoside 5'-triphosphate + ADP. Major role in the synthesis of nucleoside triphosphates other than ATP. The ATP gamma phosphate is transferred to the NDP beta phosphate via a ping-pong mechanism, using a phosphorylated active-site intermediate. The polypeptide is Nucleoside diphosphate kinase (Bordetella bronchiseptica (strain ATCC BAA-588 / NCTC 13252 / RB50) (Alcaligenes bronchisepticus)).